A 1009-amino-acid chain; its full sequence is Type VII secretion system accessory factor EsaA (1009 aa).

The next 6 membrane-spanning stretches (helical) occupy residues 7 to 27, 822 to 842, 869 to 889, 903 to 923, 928 to 948, and 979 to 999; these read IYALIVTLIIIIAIVSMIFFV, ISPTLFVLLMYLLSMITAYIF, VITSGVIGTTGLVEGLIVGLI, KFILMVILTMMVFVLINTYLL, SIGMFLMIAALGLYFVAMNNL, and IGLALVILTVLVIIGFVLNMF.

This sequence belongs to the EsaA family. As to quaternary structure, homodimer. Interacts with EssB.

The protein resides in the cell membrane. Its function is as follows. Component of the type VII secretion system (Ess). Provides together with EssB and other components such as EssC and EssE a secretion platform across the cytoplasmic membrane in the host. This Staphylococcus aureus (strain Mu50 / ATCC 700699) protein is Type VII secretion system accessory factor EsaA.